Consider the following 283-residue polypeptide: Rhomboid-like protease 2 (283 aa).

Residues 1-11 (MANIRTLSDYA) show a composition bias toward polar residues. The interval 1 to 26 (MANIRTLSDYASSPPRGSSALEGEVG) is disordered. Transmembrane regions (helical) follow at residues 62–82 (IIII…AGLA), 114–134 (ICPL…WVQI), and 149–169 (LLAV…AVLF). The active-site Nucleophile is the Ser178. Helical transmembrane passes span 179-199 (TAVF…WHAI), 205-225 (AIIS…GSHM), 227-247 (SVGH…LNEN), and 260-280 (LTSQ…IFLV). The active site involves His230.

Belongs to the peptidase S54 family.

Its subcellular location is the membrane. The catalysed reaction is Cleaves type-1 transmembrane domains using a catalytic dyad composed of serine and histidine that are contributed by different transmembrane domains.. Its function is as follows. Serine protease involved in intramembrane proteolysis and the subsequent release of polypeptides from their membrane anchors. This chain is Rhomboid-like protease 2 (ROM2), found in Toxoplasma gondii.